Reading from the N-terminus, the 1381-residue chain is Hepatocyte growth factor receptor (1381 aa).

A signal peptide spans 1 to 24; sequence MKAPAVLVPGILVLLFTLVQRSNG. Residues 25–932 lie on the Extracellular side of the membrane; sequence ECKEALAKSE…VIVQPDQNFT (908 aa). A Sema domain is found at 27 to 515; the sequence is KEALAKSEMN…TGKKITKIPL (489 aa). The N-linked (GlcNAc...) asparagine glycan is linked to asparagine 45. Intrachain disulfides connect cysteine 95–cysteine 101, cysteine 98–cysteine 160, cysteine 133–cysteine 141, and cysteine 172–cysteine 175. N-linked (GlcNAc...) asparagine glycosylation occurs at asparagine 106. Residue asparagine 149 is glycosylated (N-linked (GlcNAc...) asparagine). Asparagine 202 is a glycosylation site (N-linked (GlcNAc...) asparagine). Disulfide bonds link cysteine 298/cysteine 363 and cysteine 385/cysteine 397. N-linked (GlcNAc...) asparagine glycans are attached at residues asparagine 399 and asparagine 405. 4 cysteine pairs are disulfide-bonded: cysteine 520-cysteine 538, cysteine 526-cysteine 561, cysteine 529-cysteine 545, and cysteine 541-cysteine 551. IPT/TIG domains lie at 563-655, 657-739, and 742-836; these read PAIY…FSYV, PIIT…FSYR, and PIVY…LIYV. The O-linked (Man) threonine glycan is linked to threonine 582. N-linked (GlcNAc...) asparagine glycans are attached at residues asparagine 607 and asparagine 635. 2 O-linked (Man) threonine glycosylation sites follow: threonine 676 and threonine 761. N-linked (GlcNAc...) asparagine glycosylation is found at asparagine 785, asparagine 879, and asparagine 930. Residues 933–955 traverse the membrane as a helical segment; that stretch reads GLIAGVVSISIALLLLLGLFLWL. The Cytoplasmic segment spans residues 956–1381; that stretch reads KKRKQIKDLG…EDNADDEVDT (426 aa). At serine 966 the chain carries Phosphoserine. Phosphothreonine is present on threonine 977. Phosphoserine is present on residues serine 990, serine 997, and serine 1000. At tyrosine 1003 the chain carries Phosphotyrosine. Residues 1078 to 1345 enclose the Protein kinase domain; the sequence is VHFNEVIGRG…RISAIFSTFI (268 aa). ATP-binding positions include 1084-1092 and lysine 1110; that span reads IGRGHFGCV. The active-site Proton acceptor is the aspartate 1204. The tract at residues 1212–1381 is interaction with RANBP9; the sequence is LDEKFTVKVA…EDNADDEVDT (170 aa). Tyrosine 1230 carries the post-translational modification Phosphotyrosine. Residues tyrosine 1234 and tyrosine 1235 each carry the phosphotyrosine; by autocatalysis modification. Residue threonine 1289 is modified to Phosphothreonine. Positions 1320–1359 are interaction with MUC20; the sequence is WHPKAEMRPSFSELVSRISAIFSTFIGEHYVHVNATYVNV. Residues tyrosine 1349 and tyrosine 1356 each carry the phosphotyrosine; by autocatalysis modification. Tyrosine 1365 carries the post-translational modification Phosphotyrosine.

Belongs to the protein kinase superfamily. Tyr protein kinase family. As to quaternary structure, heterodimer made of an alpha chain (50 kDa) and a beta chain (145 kDa) which are disulfide linked. Binds PLXNB1. Interacts when phosphorylated with downstream effectors including STAT3, PIK3R1, SRC, PCLG1, GRB2 and GAB1. Interacts with SPSB1, SPSB2 and SPSB4. Interacts with INPP5D/SHIP1. When phosphorylated at Tyr-1356, interacts with INPPL1/SHIP2. Interacts with RANBP9 and RANBP10, as well as SPSB1, SPSB2, SPSB3 and SPSB4. SPSB1 binding occurs in the presence and in the absence of HGF, however HGF treatment has a positive effect on this interaction. Interacts with MUC20; prevents interaction with GRB2 and suppresses hepatocyte growth factor-induced cell proliferation. Interacts with GRB10. Interacts with PTPN1 and PTPN2. Interacts with HSP90AA1 and HSP90AB1; the interaction suppresses MET kinase activity. Interacts with tensin TNS3. Interacts (when phosphorylated) with tensin TNS4 (via SH2 domain); the interaction increases MET protein stability by inhibiting MET endocytosis and subsequent lysosomal degradation. In terms of processing, autophosphorylated in response to ligand binding on Tyr-1234 and Tyr-1235 in the kinase domain leading to further phosphorylation of Tyr-1349 and Tyr-1356 in the C-terminal multifunctional docking site. Dephosphorylated by PTPRJ at Tyr-1349 and Tyr-1365. Dephosphorylated by PTPN1 and PTPN2. Post-translationally, ubiquitinated. Ubiquitination by CBL regulates the receptor stability and activity through proteasomal degradation. O-mannosylation of IPT/TIG domains by TMEM260 is required for protein maturation. O-mannosylated residues are composed of single mannose glycans that are not elongated or modified.

The protein localises to the membrane. The enzyme catalyses L-tyrosyl-[protein] + ATP = O-phospho-L-tyrosyl-[protein] + ADP + H(+). In its inactive state, the C-terminal tail interacts with the catalytic domain and inhibits the kinase activity. Upon ligand binding, the C-terminal tail is displaced and becomes phosphorylated, thus increasing the kinase activity. Its function is as follows. Receptor tyrosine kinase that transduces signals from the extracellular matrix into the cytoplasm by binding to hepatocyte growth factor/HGF ligand. Regulates many physiological processes including proliferation, scattering, morphogenesis and survival. Ligand binding at the cell surface induces autophosphorylation of MET on its intracellular domain that provides docking sites for downstream signaling molecules. Following activation by ligand, interacts with the PI3-kinase subunit PIK3R1, PLCG1, SRC, GRB2, STAT3 or the adapter GAB1. Recruitment of these downstream effectors by MET leads to the activation of several signaling cascades including the RAS-ERK, PI3 kinase-AKT, or PLCgamma-PKC. The RAS-ERK activation is associated with the morphogenetic effects while PI3K/AKT coordinates prosurvival effects. During embryonic development, MET signaling plays a role in gastrulation, development and migration of muscles and neuronal precursors, angiogenesis and kidney formation. In adults, participates in wound healing as well as organ regeneration and tissue remodeling. Also promotes differentiation and proliferation of hematopoietic cells. The polypeptide is Hepatocyte growth factor receptor (MET) (Papio anubis (Olive baboon)).